A 218-amino-acid polypeptide reads, in one-letter code: uncharacterized protein (218 aa).

Transmembrane regions (helical) follow at residues 28 to 48 (ILLF…LSGL), 66 to 86 (FDIG…WKPL), 92 to 112 (LGTL…TKIL), 122 to 142 (MIFC…YLTC), and 173 to 193 (ISVC…TVLF).

The protein resides in the cell membrane. This is an uncharacterized protein from Haemophilus influenzae (strain ATCC 51907 / DSM 11121 / KW20 / Rd).